A 545-amino-acid polypeptide reads, in one-letter code: Glucose-6-phosphate isomerase (545 aa).

E351 acts as the Proton donor in catalysis. Catalysis depends on residues H382 and K510.

It belongs to the GPI family.

It localises to the cytoplasm. It carries out the reaction alpha-D-glucose 6-phosphate = beta-D-fructose 6-phosphate. It functions in the pathway carbohydrate biosynthesis; gluconeogenesis. Its pathway is carbohydrate degradation; glycolysis; D-glyceraldehyde 3-phosphate and glycerone phosphate from D-glucose: step 2/4. Catalyzes the reversible isomerization of glucose-6-phosphate to fructose-6-phosphate. The protein is Glucose-6-phosphate isomerase of Shewanella baltica (strain OS185).